The chain runs to 320 residues: Cytochrome f (320 aa).

Positions 1–35 (MQTRNAFSWIKKEITRSISVLLMIYIITRAPISNA) are cleaved as a signal peptide. Heme contacts are provided by Tyr36, Cys56, Cys59, and His60. Residues 286-305 (VQGLLLFLASIILAQIFLVL) form a helical membrane-spanning segment.

This sequence belongs to the cytochrome f family. As to quaternary structure, the 4 large subunits of the cytochrome b6-f complex are cytochrome b6, subunit IV (17 kDa polypeptide, petD), cytochrome f and the Rieske protein, while the 4 small subunits are PetG, PetL, PetM and PetN. The complex functions as a dimer. Requires heme as cofactor.

It is found in the plastid. The protein localises to the chloroplast thylakoid membrane. Its function is as follows. Component of the cytochrome b6-f complex, which mediates electron transfer between photosystem II (PSII) and photosystem I (PSI), cyclic electron flow around PSI, and state transitions. The chain is Cytochrome f (petA) from Vicia faba (Broad bean).